Here is a 213-residue protein sequence, read N- to C-terminus: mRNA-decapping protein OPG121 (213 aa).

Residues Glu-16 and Arg-50 each contribute to the N(7)-methyl-GTP site. A Nudix hydrolase domain is found at 30–209 (KDTHVFAACI…EYLSYIYNML (180 aa)). The short motif at 111 to 132 (GKLDKKESIKDCLRRELKEESD) is the Nudix box element. Residues Glu-117, Glu-126, Glu-130, Asp-151, and Glu-183 each coordinate Mg(2+). The active-site Nucleophile is Glu-126. Asp-151 provides a ligand contact to N(7)-methyl-GTP.

The protein belongs to the Nudix hydrolase family. Mg(2+) is required as a cofactor. Requires Mn(2+) as cofactor.

The catalysed reaction is a 5'-end (N(7)-methyl 5'-triphosphoguanosine)-guanosine in mRNA + H2O = a 5'-end phospho-guanosine in mRNA + N(7)-methyl-GDP + 2 H(+). Functionally, decapping enzyme that remove the protective 5'-cap from both host and viral mRNAs to commit transcripts for decay by the cellular exonuclease XRN1. Accelerates viral and cellular mRNA turnover to eliminate competing host mRNAs and allow stage-specific synthesis of viral proteins. Acceleration of the turnover of cellular transcripts may even promote the shutoff of host protein synthesis. The sequence is that of mRNA-decapping protein OPG121 (OPG121) from Homo sapiens (Human).